We begin with the raw amino-acid sequence, 350 residues long: ATPase GET3 (350 aa).

26–33 (KGGVGKTT) is a binding site for ATP. Aspartate 57 is an active-site residue. Glutamate 243 and asparagine 270 together coordinate ATP. Positions 282 and 285 each coordinate Zn(2+).

It belongs to the arsA ATPase family. In terms of assembly, homodimer. Component of the Golgi to ER traffic (GET) complex, which is composed of GET1, GET2 and GET3. Within the complex, GET1 and GET2 form a heterotetramer which is stabilized by phosphatidylinositol binding and which binds to the GET3 homodimer. Interacts with the chloride channel protein GEF1.

Its subcellular location is the cytoplasm. It localises to the endoplasmic reticulum. It is found in the golgi apparatus. ATPase required for the post-translational delivery of tail-anchored (TA) proteins to the endoplasmic reticulum. Recognizes and selectively binds the transmembrane domain of TA proteins in the cytosol. This complex then targets to the endoplasmic reticulum by membrane-bound receptors GET1 and GET2, where the tail-anchored protein is released for insertion. This process is regulated by ATP binding and hydrolysis. ATP binding drives the homodimer towards the closed dimer state, facilitating recognition of newly synthesized TA membrane proteins. ATP hydrolysis is required for insertion. Subsequently, the homodimer reverts towards the open dimer state, lowering its affinity for the GET1-GET2 receptor, and returning it to the cytosol to initiate a new round of targeting. Cooperates with the HDEL receptor ERD2 to mediate the ATP-dependent retrieval of resident ER proteins that contain a C-terminal H-D-E-L retention signal from the Golgi to the ER. Involved in low-level resistance to the oxyanions arsenite and arsenate, and in heat tolerance. This is ATPase GET3 from Candida dubliniensis (strain CD36 / ATCC MYA-646 / CBS 7987 / NCPF 3949 / NRRL Y-17841) (Yeast).